The primary structure comprises 326 residues: Vitamin B12 import system permease protein BtuC (326 aa).

9 helical membrane passes run 15–35 (WLLC…CAGE), 61–81 (LAVL…QALF), 88–108 (PGLL…VLLG), 112–132 (LPNW…TLIL), 146–166 (LLAG…AIYF), 184–204 (GGVD…LLWI), 240–260 (GWMV…GLVI), 274–294 (VLLP…DVVA), and 302–322 (ELPI…WLLL).

The protein belongs to the binding-protein-dependent transport system permease family. FecCD subfamily. In terms of assembly, the complex is composed of two ATP-binding proteins (BtuD), two transmembrane proteins (BtuC) and a solute-binding protein (BtuF).

It is found in the cell inner membrane. Part of the ABC transporter complex BtuCDF involved in vitamin B12 import. Involved in the translocation of the substrate across the membrane. The sequence is that of Vitamin B12 import system permease protein BtuC from Escherichia coli O8 (strain IAI1).